Reading from the N-terminus, the 287-residue chain is tRNA pseudouridine synthase B (287 aa).

Catalysis depends on Asp38, which acts as the Nucleophile.

The protein belongs to the pseudouridine synthase TruB family. Type 1 subfamily.

It carries out the reaction uridine(55) in tRNA = pseudouridine(55) in tRNA. Responsible for synthesis of pseudouridine from uracil-55 in the psi GC loop of transfer RNAs. The polypeptide is tRNA pseudouridine synthase B (Aquifex aeolicus (strain VF5)).